Consider the following 357-residue polypeptide: Sorbitol dehydrogenase (357 aa).

The residue at position 2 (Ala2) is an N-acetylalanine. Cys45 is a Zn(2+) binding site. Substrate is bound at residue Tyr51. Zn(2+) contacts are provided by His70 and Glu71. Glu156 provides a ligand contact to substrate. NAD(+)-binding residues include Ile184, Asp204, and Arg209. 2 positions are modified to phosphoserine: Ser211 and Ser225. NAD(+) contacts are provided by residues 273-275 and 297-299; these read VGL and VFR. Substrate-binding residues include Arg299 and Tyr300.

It belongs to the zinc-containing alcohol dehydrogenase family. In terms of assembly, homotetramer. The cofactor is Zn(2+).

The protein localises to the mitochondrion membrane. The protein resides in the cell projection. It is found in the cilium. It localises to the flagellum. It catalyses the reaction xylitol + NAD(+) = D-xylulose + NADH + H(+). It carries out the reaction L-iditol + NAD(+) = keto-L-sorbose + NADH + H(+). The enzyme catalyses keto-D-fructose + NADH + H(+) = D-sorbitol + NAD(+). Functionally, polyol dehydrogenase that catalyzes the reversible NAD(+)-dependent oxidation of various sugar alcohols. Is active with xylitol, L-iditol and D-sorbitol (D-glucitol) as substrates, leading to the C2-oxidized products D-xylulose, L-sorbose and D-fructose, respectively. Is a key enzyme in the polyol pathway that interconverts glucose and fructose via sorbitol, which constitutes an important alternate route for glucose metabolism. May play a role in sperm motility by using sorbitol as an alternative energy source for sperm motility. The sequence is that of Sorbitol dehydrogenase (SORD) from Pongo abelii (Sumatran orangutan).